The following is a 144-amino-acid chain: L-fucose mutarotase (144 aa).

H22 serves as the catalytic Proton donor. Substrate is bound by residues D30, R109, and 131 to 133; that span reads YGN.

It belongs to the RbsD / FucU family. FucU mutarotase subfamily. In terms of assembly, homodecamer.

The protein resides in the cytoplasm. It carries out the reaction alpha-L-fucose = beta-L-fucose. The protein operates within carbohydrate metabolism; L-fucose metabolism. Functionally, involved in the anomeric conversion of L-fucose. The polypeptide is L-fucose mutarotase (Haemophilus influenzae (strain 86-028NP)).